Consider the following 269-residue polypeptide: Formamidopyrimidine-DNA glycosylase (269 aa).

P2 (schiff-base intermediate with DNA) is an active-site residue. The Proton donor role is filled by E3. The Proton donor; for beta-elimination activity role is filled by K57. DNA contacts are provided by H90, R109, and K150. An FPG-type zinc finger spans residues 235–269; the sequence is QVYGRKGEPCRVCGTPIVATKHAQRATFYCRQCQK. Catalysis depends on R259, which acts as the Proton donor; for delta-elimination activity.

Belongs to the FPG family. Monomer. Zn(2+) is required as a cofactor.

The enzyme catalyses Hydrolysis of DNA containing ring-opened 7-methylguanine residues, releasing 2,6-diamino-4-hydroxy-5-(N-methyl)formamidopyrimidine.. It catalyses the reaction 2'-deoxyribonucleotide-(2'-deoxyribose 5'-phosphate)-2'-deoxyribonucleotide-DNA = a 3'-end 2'-deoxyribonucleotide-(2,3-dehydro-2,3-deoxyribose 5'-phosphate)-DNA + a 5'-end 5'-phospho-2'-deoxyribonucleoside-DNA + H(+). Its function is as follows. Involved in base excision repair of DNA damaged by oxidation or by mutagenic agents. Acts as a DNA glycosylase that recognizes and removes damaged bases. Has a preference for oxidized purines, such as 7,8-dihydro-8-oxoguanine (8-oxoG). Has AP (apurinic/apyrimidinic) lyase activity and introduces nicks in the DNA strand. Cleaves the DNA backbone by beta-delta elimination to generate a single-strand break at the site of the removed base with both 3'- and 5'-phosphates. The sequence is that of Formamidopyrimidine-DNA glycosylase from Escherichia coli (strain K12 / MC4100 / BW2952).